The sequence spans 418 residues: Glutamyl-tRNA reductase (418 aa).

Substrate-binding positions include 49 to 52 (TCNR), Ser109, 114 to 116 (EPQ), and Gln120. The active-site Nucleophile is Cys50. 189–194 (GAGETI) serves as a coordination point for NADP(+).

It belongs to the glutamyl-tRNA reductase family. Homodimer.

The enzyme catalyses (S)-4-amino-5-oxopentanoate + tRNA(Glu) + NADP(+) = L-glutamyl-tRNA(Glu) + NADPH + H(+). It functions in the pathway porphyrin-containing compound metabolism; protoporphyrin-IX biosynthesis; 5-aminolevulinate from L-glutamyl-tRNA(Glu): step 1/2. Its function is as follows. Catalyzes the NADPH-dependent reduction of glutamyl-tRNA(Glu) to glutamate 1-semialdehyde (GSA). This Shigella flexneri protein is Glutamyl-tRNA reductase.